We begin with the raw amino-acid sequence, 441 residues long: Ribosomal protein uS12 methylthiotransferase RimO (441 aa).

One can recognise an MTTase N-terminal domain in the interval 7–117 (PKISFVSLGC…VLEAVHRALP (111 aa)). [4Fe-4S] cluster is bound by residues cysteine 16, cysteine 52, cysteine 81, cysteine 148, cysteine 152, and cysteine 155. The region spanning 134-371 (LTPRHYAYLK…MARQQKISAR (238 aa)) is the Radical SAM core domain. Positions 374 to 440 (KRKVGTRQQV…AYDLHGTVAG (67 aa)) constitute a TRAM domain.

It belongs to the methylthiotransferase family. RimO subfamily. Requires [4Fe-4S] cluster as cofactor.

It is found in the cytoplasm. The enzyme catalyses L-aspartate(89)-[ribosomal protein uS12]-hydrogen + (sulfur carrier)-SH + AH2 + 2 S-adenosyl-L-methionine = 3-methylsulfanyl-L-aspartate(89)-[ribosomal protein uS12]-hydrogen + (sulfur carrier)-H + 5'-deoxyadenosine + L-methionine + A + S-adenosyl-L-homocysteine + 2 H(+). Catalyzes the methylthiolation of an aspartic acid residue of ribosomal protein uS12. The sequence is that of Ribosomal protein uS12 methylthiotransferase RimO from Rhodopseudomonas palustris (strain BisA53).